A 78-amino-acid chain; its full sequence is Sec-independent protein translocase protein TatA (78 aa).

Residues 1–21 (MGSLSIWHWIVVIAVVLLLFG) traverse the membrane as a helical segment. Positions 43–60 (LQDDEKTAEKSEPVKSID) are enriched in basic and acidic residues. The segment at 43–78 (LQDDEKTAEKSEPVKSIDHTSTPGATNRTDVGSKAV) is disordered. Over residues 61–72 (HTSTPGATNRTD) the composition is skewed to polar residues.

It belongs to the TatA/E family. The Tat system comprises two distinct complexes: a TatABC complex, containing multiple copies of TatA, TatB and TatC subunits, and a separate TatA complex, containing only TatA subunits. Substrates initially bind to the TatABC complex, which probably triggers association of the separate TatA complex to form the active translocon.

It localises to the cell inner membrane. In terms of biological role, part of the twin-arginine translocation (Tat) system that transports large folded proteins containing a characteristic twin-arginine motif in their signal peptide across membranes. TatA could form the protein-conducting channel of the Tat system. In Rhodopseudomonas palustris (strain ATCC BAA-98 / CGA009), this protein is Sec-independent protein translocase protein TatA.